The sequence spans 66 residues: DNA-directed RNA polymerase subunit Rpo10 (66 aa).

Positions 7, 10, 44, and 45 each coordinate Zn(2+).

This sequence belongs to the archaeal Rpo10/eukaryotic RPB10 RNA polymerase subunit family. Part of the RNA polymerase complex. Requires Zn(2+) as cofactor.

It localises to the cytoplasm. It catalyses the reaction RNA(n) + a ribonucleoside 5'-triphosphate = RNA(n+1) + diphosphate. Functionally, DNA-dependent RNA polymerase (RNAP) catalyzes the transcription of DNA into RNA using the four ribonucleoside triphosphates as substrates. The sequence is that of DNA-directed RNA polymerase subunit Rpo10 from Pyrobaculum neutrophilum (strain DSM 2338 / JCM 9278 / NBRC 100436 / V24Sta) (Thermoproteus neutrophilus).